The sequence spans 202 residues: Alcohol dehydrogenase-related 31 kDa protein (202 aa).

Tyr11–Leu34 contacts NAD(+). A substrate-binding site is contributed by Ser139. The active-site Proton acceptor is Tyr152.

This sequence belongs to the short-chain dehydrogenases/reductases (SDR) family.

The polypeptide is Alcohol dehydrogenase-related 31 kDa protein (Adhr) (Drosophila erecta (Fruit fly)).